Here is a 130-residue protein sequence, read N- to C-terminus: uncharacterized protein (130 aa).

This is an uncharacterized protein from Enterobacteria phage T4 (Bacteriophage T4).